The chain runs to 252 residues: Ribosomal RNA small subunit methyltransferase J (252 aa).

S-adenosyl-L-methionine contacts are provided by residues 101 to 102, 117 to 118, 153 to 154, and Asp-171; these read RD, ER, and SS.

It belongs to the methyltransferase superfamily. RsmJ family.

The protein localises to the cytoplasm. The catalysed reaction is guanosine(1516) in 16S rRNA + S-adenosyl-L-methionine = N(2)-methylguanosine(1516) in 16S rRNA + S-adenosyl-L-homocysteine + H(+). Its function is as follows. Specifically methylates the guanosine in position 1516 of 16S rRNA. In Salmonella typhimurium (strain LT2 / SGSC1412 / ATCC 700720), this protein is Ribosomal RNA small subunit methyltransferase J.